The primary structure comprises 753 residues: Neuroendocrine convertase 1 (753 aa).

The first 27 residues, 1–27 (MEQRGWTLQCTAFAFFCVWCALNSVKA), serve as a signal peptide directing secretion. A propeptide spanning residues 28–110 (KRQFVNEWAA…QQYEKERSKR (83 aa)) is cleaved from the precursor. A Peptidase S8 domain is found at 129–450 (QWYLQDTRMT…FGLLNAKALV (322 aa)). Catalysis depends on charge relay system residues Asp-167 and His-208. Intrachain disulfides connect Cys-225–Cys-374 and Cys-317–Cys-347. Ser-382 (charge relay system) is an active-site residue. Asn-401 carries an N-linked (GlcNAc...) asparagine glycan. Positions 460–597 (NVPEKKECVV…KLILHGTSSQ (138 aa)) constitute a P/Homo B domain. Cys-467 and Cys-494 form a disulfide bridge. Polar residues predominate over residues 633–651 (QKSLNGNLLVPKNSSSSNV). Positions 633 to 663 (QKSLNGNLLVPKNSSSSNVEGRRDEQVQGTP) are disordered. N-linked (GlcNAc...) asparagine glycosylation is present at Asn-645.

It belongs to the peptidase S8 family. Furin subfamily. Ca(2+) serves as cofactor.

Its subcellular location is the cytoplasmic vesicle. It localises to the secretory vesicle. The catalysed reaction is Release of protein hormones, neuropeptides and renin from their precursors, generally by hydrolysis of -Lys-Arg-|- bonds.. Its function is as follows. Involved in the processing of hormone and other protein precursors at sites comprised of pairs of basic amino acid residues. Substrates include POMC, renin, enkephalin, dynorphin, somatostatin, insulin and AGRP. In Mus musculus (Mouse), this protein is Neuroendocrine convertase 1 (Pcsk1).